Consider the following 483-residue polypeptide: BTB/POZ domain and ankyrin repeat-containing protein NBCL (483 aa).

The 85-residue stretch at 25–109 folds into the BTB domain; the sequence is SDVTFSVEGR…LYSGQVSIVP (85 aa). A C2HC NPR-type zinc finger spans residues 115-129; sequence RPNCGERACWHTHCT. Cysteine 118, cysteine 123, histidine 125, and cysteine 128 together coordinate Zn(2+). 4 ANK repeats span residues 254 to 283, 284 to 313, 318 to 347, and 351 to 385; these read QKIR…LNLD, EALA…DVNY, SGKT…DPNV, and DGVT…KLRL. The tract at residues 401-437 is disordered; it reads EGNANANSSNNNNAPCSAATPIYPPMNEDHNSSSSNA. Low complexity predominate over residues 403–419; sequence NANANSSNNNNAPCSAA.

It belongs to the plant 'ANKYRIN-BTB/POZ' family. 'NOOT-BOP-COCH-like' (NBCL) subfamily. In terms of assembly, homodimer. Interacts with APP1 around the plasma membrane and in the nucleus; this interaction disturbs APP1-mediated regulation of the nuclear transcription factor Y subunit (NF-YA1). Mainly expressed in root nodules, to a lesser extent in shoot apical meristems (SAM) and root meristems (RM), and barely in leaves, non-nodulating roots and root apical meristems (RAM).

Its subcellular location is the nucleus. The protein localises to the cytoplasm. It localises to the cell membrane. It functions in the pathway protein modification; protein ubiquitination. In terms of biological role, may act as a substrate-specific adapter of an E3 ubiquitin-protein ligase complex (CUL3-RBX1-BTB) which mediates the ubiquitination and subsequent proteasomal degradation of target proteins. Transcriptional co-regulator involved in the promotion of leaf and floral meristem fate and determinacy. Required for the abscission of senescent organs, probably by regulating the cell wall disorganization in abscission zones (AZs, e.g. pulvini at the base of leaves). Involved in the coordination of the symbiotic nodule developmental program; promotes the formation of root nodules by interacting directly with APP1 to modulate the expression of the nuclear transcription factor Y subunit (NF-YA1), a key nodulin. Necessary for the robust maintenance of nodule identity throughout the nodule developmental program. This is BTB/POZ domain and ankyrin repeat-containing protein NBCL from Lotus japonicus (Lotus corniculatus var. japonicus).